Here is a 27-residue protein sequence, read N- to C-terminus: GFLDIVLHVGLAAGKAALNAVNEAVNQ.

In terms of tissue distribution, expressed by the skin glands.

The protein resides in the secreted. Functionally, has antimicrobial activity. The chain is Cruzioseptin-14 from Cruziohyla calcarifer (Splendid leaf frog).